A 231-amino-acid polypeptide reads, in one-letter code: Phosphatidylserine decarboxylase proenzyme (231 aa).

Residue serine 188 is the Schiff-base intermediate with substrate; via pyruvic acid of the active site. Serine 188 bears the Pyruvic acid (Ser); by autocatalysis mark.

Belongs to the phosphatidylserine decarboxylase family. PSD-A subfamily. As to quaternary structure, heterodimer of a large membrane-associated beta subunit and a small pyruvoyl-containing alpha subunit. It depends on pyruvate as a cofactor. Is synthesized initially as an inactive proenzyme. Formation of the active enzyme involves a self-maturation process in which the active site pyruvoyl group is generated from an internal serine residue via an autocatalytic post-translational modification. Two non-identical subunits are generated from the proenzyme in this reaction, and the pyruvate is formed at the N-terminus of the alpha chain, which is derived from the carboxyl end of the proenzyme. The post-translation cleavage follows an unusual pathway, termed non-hydrolytic serinolysis, in which the side chain hydroxyl group of the serine supplies its oxygen atom to form the C-terminus of the beta chain, while the remainder of the serine residue undergoes an oxidative deamination to produce ammonia and the pyruvoyl prosthetic group on the alpha chain.

The protein resides in the cell membrane. The catalysed reaction is a 1,2-diacyl-sn-glycero-3-phospho-L-serine + H(+) = a 1,2-diacyl-sn-glycero-3-phosphoethanolamine + CO2. Its pathway is phospholipid metabolism; phosphatidylethanolamine biosynthesis; phosphatidylethanolamine from CDP-diacylglycerol: step 2/2. Functionally, catalyzes the formation of phosphatidylethanolamine (PtdEtn) from phosphatidylserine (PtdSer). The sequence is that of Phosphatidylserine decarboxylase proenzyme from Rickettsia africae (strain ESF-5).